The following is a 423-amino-acid chain: UDP-N-acetylglucosamine 1-carboxyvinyltransferase (423 aa).

A phosphoenolpyruvate-binding site is contributed by 22 to 23 (KN). Arg93 lines the UDP-N-acetyl-alpha-D-glucosamine pocket. Catalysis depends on Cys117, which acts as the Proton donor. At Cys117 the chain carries 2-(S-cysteinyl)pyruvic acid O-phosphothioketal. UDP-N-acetyl-alpha-D-glucosamine is bound by residues 122-126 (RPIDL), Asp307, and Val329.

This sequence belongs to the EPSP synthase family. MurA subfamily.

The protein resides in the cytoplasm. It carries out the reaction phosphoenolpyruvate + UDP-N-acetyl-alpha-D-glucosamine = UDP-N-acetyl-3-O-(1-carboxyvinyl)-alpha-D-glucosamine + phosphate. It functions in the pathway cell wall biogenesis; peptidoglycan biosynthesis. Functionally, cell wall formation. Adds enolpyruvyl to UDP-N-acetylglucosamine. The protein is UDP-N-acetylglucosamine 1-carboxyvinyltransferase of Chlorobium chlorochromatii (strain CaD3).